Consider the following 373-residue polypeptide: Chaperone protein DnaJ (373 aa).

Residues 4–69 (SYYEILEITQ…EKRAIYDRYG (66 aa)) form the J domain. A CR-type zinc finger spans residues 135-212 (GCKKNIDFTY…CKGLGYNESK (78 aa)). Zn(2+) contacts are provided by cysteine 148, cysteine 151, cysteine 164, cysteine 167, cysteine 186, cysteine 189, cysteine 200, and cysteine 203. CXXCXGXG motif repeat units follow at residues 148-155 (CKTCNGTG), 164-171 (CPKCQGRG), 186-193 (CPDCQGIG), and 200-207 (CSDCKGLG).

It belongs to the DnaJ family. Homodimer. Zn(2+) serves as cofactor.

The protein resides in the cytoplasm. In terms of biological role, participates actively in the response to hyperosmotic and heat shock by preventing the aggregation of stress-denatured proteins and by disaggregating proteins, also in an autonomous, DnaK-independent fashion. Unfolded proteins bind initially to DnaJ; upon interaction with the DnaJ-bound protein, DnaK hydrolyzes its bound ATP, resulting in the formation of a stable complex. GrpE releases ADP from DnaK; ATP binding to DnaK triggers the release of the substrate protein, thus completing the reaction cycle. Several rounds of ATP-dependent interactions between DnaJ, DnaK and GrpE are required for fully efficient folding. Also involved, together with DnaK and GrpE, in the DNA replication of plasmids through activation of initiation proteins. This Campylobacter jejuni (strain RM1221) protein is Chaperone protein DnaJ.